A 189-amino-acid polypeptide reads, in one-letter code: Peptidyl-tRNA hydrolase (189 aa).

Y14 contacts tRNA. The Proton acceptor role is filled by H19. The tRNA site is built by F64, N66, and N112.

This sequence belongs to the PTH family. As to quaternary structure, monomer.

It localises to the cytoplasm. The catalysed reaction is an N-acyl-L-alpha-aminoacyl-tRNA + H2O = an N-acyl-L-amino acid + a tRNA + H(+). Functionally, hydrolyzes ribosome-free peptidyl-tRNAs (with 1 or more amino acids incorporated), which drop off the ribosome during protein synthesis, or as a result of ribosome stalling. Catalyzes the release of premature peptidyl moieties from peptidyl-tRNA molecules trapped in stalled 50S ribosomal subunits, and thus maintains levels of free tRNAs and 50S ribosomes. This Erythrobacter litoralis (strain HTCC2594) protein is Peptidyl-tRNA hydrolase.